A 199-amino-acid polypeptide reads, in one-letter code: Large ribosomal subunit protein bL25 (199 aa).

Belongs to the bacterial ribosomal protein bL25 family. CTC subfamily. Part of the 50S ribosomal subunit; part of the 5S rRNA/L5/L18/L25 subcomplex. Contacts the 5S rRNA. Binds to the 5S rRNA independently of L5 and L18.

Its function is as follows. This is one of the proteins that binds to the 5S RNA in the ribosome where it forms part of the central protuberance. The chain is Large ribosomal subunit protein bL25 from Rickettsia akari (strain Hartford).